A 255-amino-acid chain; its full sequence is MAGHSKWANIKRQKARVDAKKGKTFTQLSRAIIVAARNGLPDPAANLQLRTAIEKAKAAGIPNDNIERAIAKGAGTYGNDENNLEEIRYEGYGPGGVAILIEALTDNRNRTAADLRAAFSKNGGNLGETGCVSWMFDQKGVVILEGKVEEEVLLDASVEGGADTYEIFDSDEEQGAEVFTEVSNLETLNQTLQEKGLPVKEAELRWIPNNSIEVTDPEQGRSLLKLMDALESLDDVQNVTANFDMADELIALTIA.

Belongs to the TACO1 family.

The protein localises to the cytoplasm. The chain is Probable transcriptional regulatory protein PCC7424_2775 from Gloeothece citriformis (strain PCC 7424) (Cyanothece sp. (strain PCC 7424)).